The primary structure comprises 462 residues: MKIQLVRWHCSRNALWNRAFYSTRKATKNASSATPATMTSMVSQRQDLFMTDPLSPGSMFFLPNGAKIFNKLIEFMKLQQKFKFGFNEVVTPLIYKKTLWEKSGHWENYADDMFKVETTDEEKEEYGLKPMNCPGHCLIFGKKDRSYNELPLRFSDFSPLHRNEASGALSGLTRLRKFHQDDGHIFCTPSQVKSEIFNSLKLIDIVYNKIFPFVKGGSGAESNYFINFSTRPDHFIGDLKVWNHAEQVLKEILEESGKPWKLNPGDGAFYGPKLDIMVTDHLRKTHQVATIQLDFQLPERFDLKFKDQDNSYKRPIMIHRATFGSIERFMALLIDSNEGRWPFWLNPYQAVIIPVNTKNVQQLDMCTALQKKLRNELEADDMEPVPLNDWHFNVDLDIRNEPVGYRIKSAILKNYSYLIIVGDEEVQLQKYNIRERDNRKSFEKLTMSQIWEKFIELEKNYK.

The transit peptide at 1–45 directs the protein to the mitochondrion; the sequence is MKIQLVRWHCSRNALWNRAFYSTRKATKNASSATPATMTSMVSQR.

This sequence belongs to the class-II aminoacyl-tRNA synthetase family.

It is found in the mitochondrion matrix. The catalysed reaction is tRNA(Thr) + L-threonine + ATP = L-threonyl-tRNA(Thr) + AMP + diphosphate + H(+). The chain is Threonine--tRNA ligase, mitochondrial (MST1) from Saccharomyces cerevisiae (strain ATCC 204508 / S288c) (Baker's yeast).